The chain runs to 495 residues: Cytoplasmic alpha-amylase (495 aa).

Ca(2+) contacts are provided by N104 and D198. The active-site Nucleophile is D235. H239 is a binding site for Ca(2+). The active-site Proton donor is E265.

It belongs to the glycosyl hydrolase 13 family. As to quaternary structure, monomer. Ca(2+) is required as a cofactor.

The protein resides in the cytoplasm. The catalysed reaction is Endohydrolysis of (1-&gt;4)-alpha-D-glucosidic linkages in polysaccharides containing three or more (1-&gt;4)-alpha-linked D-glucose units.. The sequence is that of Cytoplasmic alpha-amylase (amyA) from Escherichia coli (strain K12).